A 200-amino-acid polypeptide reads, in one-letter code: ATP-dependent Clp protease proteolytic subunit 2 (200 aa).

The active-site Nucleophile is the Ser99. His124 is an active-site residue.

This sequence belongs to the peptidase S14 family. In terms of assembly, fourteen ClpP subunits assemble into 2 heptameric rings which stack back to back to give a disk-like structure with a central cavity, resembling the structure of eukaryotic proteasomes.

The protein resides in the cytoplasm. The catalysed reaction is Hydrolysis of proteins to small peptides in the presence of ATP and magnesium. alpha-casein is the usual test substrate. In the absence of ATP, only oligopeptides shorter than five residues are hydrolyzed (such as succinyl-Leu-Tyr-|-NHMec, and Leu-Tyr-Leu-|-Tyr-Trp, in which cleavage of the -Tyr-|-Leu- and -Tyr-|-Trp bonds also occurs).. Its function is as follows. Cleaves peptides in various proteins in a process that requires ATP hydrolysis. Has a chymotrypsin-like activity. Plays a major role in the degradation of misfolded proteins. The chain is ATP-dependent Clp protease proteolytic subunit 2 from Treponema denticola (strain ATCC 35405 / DSM 14222 / CIP 103919 / JCM 8153 / KCTC 15104).